A 224-amino-acid chain; its full sequence is uncharacterized protein (224 aa).

In terms of biological role, the presence of the two linear plasmids, termed pGKL1 and pGKL2, in strains of Kluyveromyces lactis confers the killer phenotype to the host cell, by promoting the secretion of a toxin able to inhibit the growth of sensitive strains. This is an uncharacterized protein from Kluyveromyces lactis (strain ATCC 8585 / CBS 2359 / DSM 70799 / NBRC 1267 / NRRL Y-1140 / WM37) (Yeast).